We begin with the raw amino-acid sequence, 202 residues long: UPF0301 protein Meso_0753 (202 aa).

The protein belongs to the UPF0301 (AlgH) family.

This chain is UPF0301 protein Meso_0753, found in Chelativorans sp. (strain BNC1).